The following is a 521-amino-acid chain: Manganese transporter pdt1 (521 aa).

S42 carries the post-translational modification Phosphoserine. Position 43 is a phosphothreonine (T43). Helical transmembrane passes span 71-91, 104-124, 152-172, 179-199, 210-230, 233-253, 260-280, 325-345, 373-393, 417-437, 440-460, and 495-515; these read YCKFIGPGFLIAVAYIDPGNY, KLLFIVFLSNLFAVYLQSLCI, VLAEIAIIATDIAEVIGTAVA, IPLVAGVVITILDVLLVLIAW, IFETAVALLVLVVAISFAVVL, VHIGGAGTVFKGFLPSSTVFS, SIGILGATVMPHSLFLGSGLV, LFTFALFTNSSILIVAGAVFY, LFAVALLFSGMSAGYVCTIAG, IAIIPCLVVSAAVGQSGLNQV, ASQVCLSILLPFLTFPLVMFT, and IVTWAIWLFLTALNLLLIVWL.

Belongs to the NRAMP family.

Its subcellular location is the endoplasmic reticulum membrane. Transports manganese ions into the cell. Regulates cell morphogenesis through control of manganese homeostasis. The sequence is that of Manganese transporter pdt1 (pdt1) from Schizosaccharomyces pombe (strain 972 / ATCC 24843) (Fission yeast).